The following is a 950-amino-acid chain: Leucine--tRNA ligase (950 aa).

Positions 72 to 83 (PYPSGEGLHVGH) match the 'HIGH' region motif. Residues 722-726 (KIGKS) carry the 'KMSKS' region motif. Residue Lys725 coordinates ATP.

Belongs to the class-I aminoacyl-tRNA synthetase family.

It localises to the cytoplasm. It catalyses the reaction tRNA(Leu) + L-leucine + ATP = L-leucyl-tRNA(Leu) + AMP + diphosphate. The sequence is that of Leucine--tRNA ligase from Mycobacterium sp. (strain KMS).